We begin with the raw amino-acid sequence, 107 residues long: Nucleoid-associated protein Pnec_0645 (107 aa).

The protein belongs to the YbaB/EbfC family. As to quaternary structure, homodimer.

It localises to the cytoplasm. Its subcellular location is the nucleoid. Binds to DNA and alters its conformation. May be involved in regulation of gene expression, nucleoid organization and DNA protection. The protein is Nucleoid-associated protein Pnec_0645 of Polynucleobacter necessarius subsp. necessarius (strain STIR1).